The primary structure comprises 256 residues: Small ribosomal subunit protein eS1 (256 aa).

Over residues 1-18 (MAVGKNKRLSKGKKGLKK) the composition is skewed to basic residues. The tract at residues 1–22 (MAVGKNKRLSKGKKGLKKKTQD) is disordered. Ala-2 bears the N-acetylalanine; partial mark.

The protein belongs to the eukaryotic ribosomal protein eS1 family. Component of the small ribosomal subunit. Mature ribosomes consist of a small (40S) and a large (60S) subunit. The 40S subunit contains about 33 different proteins and 1 molecule of RNA (18S). The 60S subunit contains about 49 different proteins and 3 molecules of RNA (25S, 5.8S and 5S).

It is found in the cytoplasm. The protein is Small ribosomal subunit protein eS1 of Pyricularia oryzae (strain Y34) (Rice blast fungus).